We begin with the raw amino-acid sequence, 321 residues long: Porin Omp2a (321 aa).

A signal peptide spans 1–22 (MNIKSLLLGSAAALVAASGAQA).

This sequence belongs to the alphaproteobacteria porin family. In terms of assembly, monomer.

It localises to the cell outer membrane. Forms passive diffusion pores that allow small molecular weight hydrophilic materials across the outer membrane. The chain is Porin Omp2a (omp2a) from Brucella abortus (strain S19).